The sequence spans 370 residues: Chloromuconate cycloisomerase (370 aa).

K165 functions as the Proton acceptor in the catalytic mechanism. D194, E220, and D245 together coordinate Mn(2+). Residue E323 is the Proton donor of the active site.

This sequence belongs to the mandelate racemase/muconate lactonizing enzyme family. The cofactor is Mn(2+).

It catalyses the reaction 2-[(2R)-2-chloro-2,5-dihydro-5-oxofuryl]acetate = 3-chloro-cis,cis-muconate + H(+). Its pathway is aromatic compound metabolism; 3-chlorocatechol degradation. The sequence is that of Chloromuconate cycloisomerase (tfdD) from Delftia acidovorans (Pseudomonas acidovorans).